The following is an 87-amino-acid chain: MKIKNSYLVIASLLYPISFISTAASLTVEQRLAALENDLQETKQELQRYKEQEKKNKAITLVRVNSAADADNKSNAFNVAKTATPIA.

Positions 1–23 (MKIKNSYLVIASLLYPISFISTA) are cleaved as a signal peptide.

Belongs to the porin LamB (TC 1.B.3) family.

It is found in the cell outer membrane. May be a sugar porin with a broad carbohydrate specificity. The polypeptide is Putative outer membrane protein ArbH (arbH) (Dickeya chrysanthemi (Pectobacterium chrysanthemi)).